Reading from the N-terminus, the 1246-residue chain is MGHSRRPVGGEKKSRGFGRSKAVADVGDGRQTGGKPQVKKATFESTKKKEIGVSDLTLLSKISNEAINDNLKLRFQHDEIYTYIGHVLVSVNPFRDLGIYTDKVLESYRGKNRLEVPPHVFAVAESAYYNMKSYNDNQCVIISGESGAGKTEAAKRIMQYIASVSGGSDSSIQHTKDMVLATNPLLESFGNAKTLRNNNSSRFGKYLELEFNSRGEPVGANITNYLLEKSRVVGQITNERNFHIFYQFTKAAPQKYRDMFGIQQPQSYLYTSRSKCYDVPGVDDAAEFRDTLNAMGVIGMSEPEQDQVFRMLSAILWIGNIQFVEDDSGNAAIPDQSTVNYVAYLLEVDPGQVNKALTIRIMETARGGRRGSVYEVPLNTVQALAVRDALAKAIYFNLFDWIVERVNQSLTARGTVANSIGILDIYGFEIFEKNSFEQLCINYVNEKLQQIFIQLTLKAEQDEYAREQIQWTPIKYFDNKVVCSLIEDKRPPGVFAALNDACATAHADSGAADNTFVGRLNFLSQNPNFENRQGQFIVKHYAGDVSYAVEGMTDKNKDQLLKDLLNLVGSSSNEFVHTLFPNQVNQDDKRRPPTASDKIKASANDLVATLMKAQPSYIRTIKPNDNKAPKEYNEGNVLHQIKYLGLQENVRIRRAGFAYRQTFDKFVERFYLLSPKTSYAGDYTWTGDAESGARQILKDTSIPQEEFQMGITKVFVKTPETLFALEAMRDRYWHNMAIRIQRAWRNYLRYRIECAIRIQRFWRRMTGGLELIKVRDQGHKVLQGRKERRRMSLLGSRRFLGDYLGIANKGGPGEMIRNGAGIGSDTVLFSCRGEVLVSKFGRSSKPSPRIFVLTNRHFIIVAQNLVNGQLVISAERTIPIGAIKSVSTSNLKDDWFSFVIGAQEPDPLMNCVFKTELFTHLSNALHGQLNIKIADHIEYNKKPGKLATVKVVKEPGSSNVDTYKSSTIHTSAGEPPSSVSKPTPRGKQVAARPVTKGKLLRPGGPGGGPSKLAARPMPARQPVPQPAASQAPAPQPAAVPRPVPQPVAAVAASHTRTASSGSMRAPPPPPPVSPPAPKKPMAKVLYDFSSAQSNELSIKAGELVEIVSKEGNGWWLCMNTTTSVQGWTPQAYLEEQKAAPPPPPPAAPRSTPATNGTATAAAAKAKPAPPAPPAKRPNMAGRKMAPPPPSAPRDSAVSMNSQDSSGGSGRGTPNSASNASLAGGLAEALRQRQEAMHGKQDDDDEW.

A disordered region spans residues 1-41 (MGHSRRPVGGEKKSRGFGRSKAVADVGDGRQTGGKPQVKKA). One can recognise a Myosin motor domain in the interval 51–730 (IGVSDLTLLS…TLFALEAMRD (680 aa)). Position 144-151 (144-151 (GESGAGKT)) interacts with ATP. The residue at position 372 (Ser372) is a Phosphoserine. The tract at residues 419-501 (SIGILDIYGF…PGVFAALNDA (83 aa)) is actin-binding. 2 consecutive IQ domains span residues 734-754 (HNMA…RIEC) and 755-780 (AIRI…QGHK). Residues 788-976 (RRRMSLLGSR…TIHTSAGEPP (189 aa)) enclose the TH1 domain. A compositionally biased stretch (polar residues) spans 956-970 (GSSNVDTYKSSTIHT). 2 disordered regions span residues 956-1080 (GSSN…PKKP) and 1127-1246 (WTPQ…DDEW). Composition is skewed to pro residues over residues 1033–1045 (APQP…PVPQ) and 1065–1078 (APPP…PAPK). The region spanning 1077–1138 (PKKPMAKVLY…PQAYLEEQKA (62 aa)) is the SH3 domain. 2 stretches are compositionally biased toward low complexity: residues 1151 to 1166 (TPAT…AKAK) and 1214 to 1228 (NSAS…LAEA). The span at 1229–1240 (LRQRQEAMHGKQ) shows a compositional bias: basic and acidic residues.

This sequence belongs to the TRAFAC class myosin-kinesin ATPase superfamily. Myosin family. Phosphorylation of the TEDS site (Ser-372) is required for the polarization of the actin cytoskeleton. Phosphorylation probably activates the myosin-I ATPase activity.

It localises to the cytoplasm. The protein resides in the cytoskeleton. It is found in the actin patch. Its function is as follows. Type-I myosin implicated in the organization of the actin cytoskeleton. Required for proper actin cytoskeleton polarization. At the cell cortex, assembles in patch-like structures together with proteins from the actin-polymerizing machinery and promotes actin assembly. Functions as actin nucleation-promoting factor (NPF) for the Arp2/3 complex. Plays an important role in polarized growth, spore germination, hyphal morphogenesis, and septal wall formation. The sequence is that of Myosin-1 (myoA) from Aspergillus terreus (strain NIH 2624 / FGSC A1156).